The following is a 646-amino-acid chain: Vitamin K-dependent protein S (646 aa).

The propeptide occupies 1-12 (GHASQVLVRKRR). The 46-residue stretch at 13–58 (ANSMLEETKKGNLERECIEELCNKEEAREVFENDPETDYFYPKYLG) folds into the Gla domain. E18, E19, E26, E28, E31, E32, E37, E38, E41, E44, and E48 each carry 4-carboxyglutamate. C29 and C34 are disulfide-bonded. The thrombin-sensitive stretch occupies residues 59–87 (CLGSFRAKLFTATRRSANGYPDLRSCVNA). In terms of domain architecture, EGF-like 1 spans 88-126 (IPDQCNPLPCSEEGYLNCKDGQATFTCICKPGWQGEKCE). Cystine bridges form between C92–C105, C97–C114, C116–C125, C132–C146, C142–C155, C157–C170, C176–C188, C183–C197, C199–C212, C218–C227, C223–C236, C238–C253, and C420–C446. The residue at position 107 (D107) is a (3R)-3-hydroxyaspartate. Positions 128-171 (DINECKDPTNINGGCSQICDNTAGSYHCSCKSGFVMLANEKDCK) constitute an EGF-like 2; calcium-binding domain. An EGF-like 3; calcium-binding domain is found at 172-213 (DMDECSVKPSVCGTAVCKNTPGDFECECSEGYRYNPTAKSCE). The 41-residue stretch at 214-254 (DIDECSENMCAQLCVNYPGGYSCYCDGKKGFKLAQDKKSCE) folds into the EGF-like 4; calcium-binding domain. Laminin G-like domains are found at residues 270-446 (LLYL…KKHC) and 455-636 (YYPG…AHSC). 2 N-linked (GlcNAc...) asparagine glycosylation sites follow: N470 and N480. C609 and C636 are joined by a disulfide.

Interacts with C4b-binding protein, a regulator of the complex system. In rabbit plasma however, protein S appears to be present only in free form. The iron and 2-oxoglutarate dependent 3-hydroxylation of aspartate and asparagine is (R) stereospecific within EGF domains. Plasma.

The protein localises to the secreted. In terms of biological role, anticoagulant plasma protein; it is a cofactor to activated protein C in the degradation of coagulation factors Va and VIIIa. It helps to prevent coagulation and stimulating fibrinolysis. The sequence is that of Vitamin K-dependent protein S (PROS1) from Oryctolagus cuniculus (Rabbit).